The primary structure comprises 161 residues: Putative pre-16S rRNA nuclease (161 aa).

A disordered region spans residues 142–161 (AGSPPGALVPRNRVDPDRHA).

Belongs to the YqgF nuclease family.

The protein localises to the cytoplasm. Functionally, could be a nuclease involved in processing of the 5'-end of pre-16S rRNA. The polypeptide is Putative pre-16S rRNA nuclease (Clavibacter sepedonicus (Clavibacter michiganensis subsp. sepedonicus)).